A 381-amino-acid chain; its full sequence is S-adenosylmethionine synthase (381 aa).

Histidine 15 contributes to the ATP binding site. Aspartate 17 provides a ligand contact to Mg(2+). Glutamate 43 contributes to the K(+) binding site. L-methionine is bound by residues glutamate 56 and glutamine 99. The interval 99–109 (QSPDINQGVDR) is flexible loop. ATP-binding positions include 164–166 (DAK), 230–231 (RF), aspartate 239, 245–246 (RK), alanine 262, and lysine 266. L-methionine is bound at residue aspartate 239. An L-methionine-binding site is contributed by lysine 270.

Belongs to the AdoMet synthase family. Homotetramer; dimer of dimers. Requires Mg(2+) as cofactor. It depends on K(+) as a cofactor.

The protein localises to the cytoplasm. It catalyses the reaction L-methionine + ATP + H2O = S-adenosyl-L-methionine + phosphate + diphosphate. Its pathway is amino-acid biosynthesis; S-adenosyl-L-methionine biosynthesis; S-adenosyl-L-methionine from L-methionine: step 1/1. Functionally, catalyzes the formation of S-adenosylmethionine (AdoMet) from methionine and ATP. The overall synthetic reaction is composed of two sequential steps, AdoMet formation and the subsequent tripolyphosphate hydrolysis which occurs prior to release of AdoMet from the enzyme. The sequence is that of S-adenosylmethionine synthase from Alteromonas mediterranea (strain DSM 17117 / CIP 110805 / LMG 28347 / Deep ecotype).